Here is a 467-residue protein sequence, read N- to C-terminus: Venom serine carboxypeptidase (467 aa).

A signal peptide spans 1 to 18 (MKKLVLLQFLFFISFARG). Asn-130 and Asn-169 each carry an N-linked (GlcNAc...) asparagine glycan. Ser-202 is a catalytic residue. Asn-304, Asn-322, and Asn-344 each carry an N-linked (GlcNAc...) asparagine glycan. Catalysis depends on residues Asp-387 and His-444.

It belongs to the peptidase S10 family. As to expression, expressed by the venom duct.

Its subcellular location is the secreted. The enzyme catalyses Release of a C-terminal amino acid with broad specificity.. This chain is Venom serine carboxypeptidase, found in Apis mellifera (Honeybee).